The following is a 27-amino-acid chain: thr operon leader peptide (27 aa).

The protein belongs to the thr operon leader peptide family.

Its function is as follows. This protein is involved in control of the biosynthesis of threonine. This Escherichia coli O157:H7 protein is thr operon leader peptide.